Here is a 517-residue protein sequence, read N- to C-terminus: MDQTPPARSEPLVSGIRTPPVRRNSKLATLGRIFKPWKWRKKKNEKLKQTTSALEKKMAGRQGREELIKQGLLEMMEQDSESKACSPKEGSQPAQSEPSAGEQETLTSEGVQPGSPSASGTDQASQDELLSSDAHPDDTAKMSSASSGEEADAGNLLPTTDEPSQEALSGSLDSPPRTLERSASQLPSPPLLPTPPPKASSKATKNVTGQAALFQGSSMKNNEPVLRGQLPTPTGSPHLTTVHRPLPPSRVIEELHRALATKHRQDSFQGRECRGSPKKRMDVRLSRTSSMERGKERDEAWSFDGASENKWTAAKDSEENKENLILSSELKDDLLLYQDEEALNDSIISGTLPRKCKKELLAVKLRNRPSKQELEDRNIFPRRTDEERQEIRQQIEMKLSKRLSQRPAVEELERRNILKQRNDQTEQEERREIKQRLTRKLNQRPTVDELRDRKILIRFSDYVEVARAQDYDRRADKPWTRLSAADKAAIRKELNEYKSNEMEVHASSKHLTRFHRP.

The disordered stretch occupies residues 1-24 (MDQTPPARSEPLVSGIRTPPVRRN). Thr29 carries the post-translational modification Phosphothreonine. Disordered stretches follow at residues 41–247 (KKKN…RPLP) and 260–320 (ATKH…SEEN). The stretch at 52–77 (SALEKKMAGRQGREELIKQGLLEMME) is one RPEL 1 repeat. The segment covering 54–68 (LEKKMAGRQGREELI) has biased composition (basic and acidic residues). Polar residues-rich tracts occupy residues 92 to 129 (QPAQSEPSAGEQETLTSEGVQPGSPSASGTDQASQDEL) and 157 to 172 (LPTTDEPSQEALSGSL). The span at 187 to 198 (PSPPLLPTPPPK) shows a compositional bias: pro residues. Ser188 carries the post-translational modification Phosphoserine. Thr194 bears the Phosphothreonine mark. Over residues 260–300 (ATKHRQDSFQGRECRGSPKKRMDVRLSRTSSMERGKERDEA) the composition is skewed to basic and acidic residues. RPEL repeat units follow at residues 359-384 (ELLAVKLRNRPSKQELEDRNIFPRRT), 397-422 (MKLSKRLSQRPAVEELERRNILKQRN), and 435-460 (QRLTRKLNQRPTVDELRDRKILIRFS). The stretch at 408 to 444 (AVEELERRNILKQRNDQTEQEERREIKQRLTRKLNQR) forms a coiled coil.

It belongs to the phosphatase and actin regulator family. In terms of assembly, binds actin and PPP1CA; thus inhibiting the protein phosphatase 1 (PP1) activity. As to expression, diffusely expressed throughout the brain cortex, with highest levels in the cortex and the hippocampus and lower levels in the striatum and thalamus.

Its subcellular location is the nucleus matrix. This chain is Phosphatase and actin regulator 3 (Phactr3), found in Rattus norvegicus (Rat).